We begin with the raw amino-acid sequence, 361 residues long: Ribosomal RNA large subunit methyltransferase M (361 aa).

S-adenosyl-L-methionine contacts are provided by residues S187, 220-223, D239, D259, and D276; that span reads CPGG. K305 serves as the catalytic Proton acceptor.

The protein belongs to the class I-like SAM-binding methyltransferase superfamily. RNA methyltransferase RlmE family. RlmM subfamily. As to quaternary structure, monomer.

Its subcellular location is the cytoplasm. It carries out the reaction cytidine(2498) in 23S rRNA + S-adenosyl-L-methionine = 2'-O-methylcytidine(2498) in 23S rRNA + S-adenosyl-L-homocysteine + H(+). Its function is as follows. Catalyzes the 2'-O-methylation at nucleotide C2498 in 23S rRNA. The chain is Ribosomal RNA large subunit methyltransferase M from Shewanella baltica (strain OS223).